A 315-amino-acid polypeptide reads, in one-letter code: Aspartate carbamoyltransferase catalytic subunit (315 aa).

2 residues coordinate carbamoyl phosphate: arginine 65 and threonine 66. Lysine 93 is a binding site for L-aspartate. Residues arginine 115, histidine 143, and glutamine 146 each contribute to the carbamoyl phosphate site. L-aspartate is bound by residues arginine 176 and arginine 231. Residues glycine 272 and proline 273 each coordinate carbamoyl phosphate.

The protein belongs to the aspartate/ornithine carbamoyltransferase superfamily. ATCase family. Heterododecamer (2C3:3R2) of six catalytic PyrB chains organized as two trimers (C3), and six regulatory PyrI chains organized as three dimers (R2).

The catalysed reaction is carbamoyl phosphate + L-aspartate = N-carbamoyl-L-aspartate + phosphate + H(+). It participates in pyrimidine metabolism; UMP biosynthesis via de novo pathway; (S)-dihydroorotate from bicarbonate: step 2/3. Catalyzes the condensation of carbamoyl phosphate and aspartate to form carbamoyl aspartate and inorganic phosphate, the committed step in the de novo pyrimidine nucleotide biosynthesis pathway. The chain is Aspartate carbamoyltransferase catalytic subunit from Hyphomonas neptunium (strain ATCC 15444).